The sequence spans 144 residues: Large ribosomal subunit protein uL13 (144 aa).

Belongs to the universal ribosomal protein uL13 family. Part of the 50S ribosomal subunit.

Its function is as follows. This protein is one of the early assembly proteins of the 50S ribosomal subunit, although it is not seen to bind rRNA by itself. It is important during the early stages of 50S assembly. This chain is Large ribosomal subunit protein uL13, found in Lachnoclostridium phytofermentans (strain ATCC 700394 / DSM 18823 / ISDg) (Clostridium phytofermentans).